The chain runs to 822 residues: SKI/DACH domain-containing protein 1 (822 aa).

Basic residues predominate over residues 245–261 (HHHHHHHHHHHHHHHRA). The segment at 245–370 (HHHHHHHHHH…SSSGSSQVSV (126 aa)) is disordered. Low complexity predominate over residues 278-318 (PHLGSFPESCSSDSESSSYSDHAANDSDFGSSLSSSSNSVS). Residues 319–338 (SEEEEEEGEEEEEEEEEEEG) show a composition bias toward acidic residues. Lys-602 is covalently cross-linked (Glycyl lysine isopeptide (Lys-Gly) (interchain with G-Cter in SUMO2)). 2 disordered regions span residues 658-677 (ETPS…TLGS) and 706-732 (LQTP…THEG). Over residues 660-675 (PSLNPLAQSQGLSCTL) the composition is skewed to polar residues.

The protein belongs to the DACH/dachshund family.

The chain is SKI/DACH domain-containing protein 1 (Skida1) from Mus musculus (Mouse).